The sequence spans 128 residues: Large ribosomal subunit protein bL12 (128 aa).

The protein belongs to the bacterial ribosomal protein bL12 family. As to quaternary structure, homodimer. Part of the ribosomal stalk of the 50S ribosomal subunit. Forms a multimeric L10(L12)X complex, where L10 forms an elongated spine to which 2 to 4 L12 dimers bind in a sequential fashion. Binds GTP-bound translation factors.

Functionally, forms part of the ribosomal stalk which helps the ribosome interact with GTP-bound translation factors. Is thus essential for accurate translation. This Streptomyces antibioticus protein is Large ribosomal subunit protein bL12.